The chain runs to 193 residues: Xanthine phosphoribosyltransferase (193 aa).

Residues Leu20 and Asn27 each contribute to the xanthine site. Residue 128 to 132 (ANGDA) participates in 5-phospho-alpha-D-ribose 1-diphosphate binding. Lys156 is a xanthine binding site.

The protein belongs to the purine/pyrimidine phosphoribosyltransferase family. Xpt subfamily. Homodimer.

The protein localises to the cytoplasm. The catalysed reaction is XMP + diphosphate = xanthine + 5-phospho-alpha-D-ribose 1-diphosphate. Its pathway is purine metabolism; XMP biosynthesis via salvage pathway; XMP from xanthine: step 1/1. Converts the preformed base xanthine, a product of nucleic acid breakdown, to xanthosine 5'-monophosphate (XMP), so it can be reused for RNA or DNA synthesis. The chain is Xanthine phosphoribosyltransferase from Staphylococcus saprophyticus subsp. saprophyticus (strain ATCC 15305 / DSM 20229 / NCIMB 8711 / NCTC 7292 / S-41).